Reading from the N-terminus, the 585-residue chain is Protein FAM151A (585 aa).

Residues 14–34 (WVFAGITCVSVVVIAAIVLAI) traverse the membrane as a helical segment.

The protein belongs to the menorin family.

It localises to the membrane. This is Protein FAM151A (FAM151A) from Homo sapiens (Human).